Consider the following 133-residue polypeptide: Snaclec echicetin subunit alpha (133 aa).

3 disulfides stabilise this stretch: Cys4–Cys15, Cys31–Cys127, and Cys102–Cys119. In terms of domain architecture, C-type lectin spans 11 to 128 (YEGHCYQLFR…CEFKFPFVCK (118 aa)).

The protein belongs to the snaclec family. Heterodimer of subunits alpha and beta; disulfide-linked. Forms an active complex with the pentameric immunoglobuline Mkappa (IgMkappa). In terms of tissue distribution, expressed by the venom gland.

It localises to the secreted. In terms of biological role, echicetin itself inhibits aggregation of washed platelets induced by vWF, thrombin or alboaggregin-A. However, when complexed with the pentameric plasma immunoglobulin Mkappa (IgMkappa), echicetin binds specifically to GPIb and activates platelets. This is caused by P-selectin expression and activation of alpha-IIb/beta-3 as well as tyrosine phosphorylation of several signal transduction molecules, including p53/56(LYN), p64, p72(SYK), p70 to p90, and p120. In vivo, it induces thrombocytopenia when injected into mice, probably accounting of activation of platelets rather than inhibition. The chain is Snaclec echicetin subunit alpha from Echis carinatus sochureki (Saw-scaled viper).